A 511-amino-acid polypeptide reads, in one-letter code: 2,3-bisphosphoglycerate-independent phosphoglycerate mutase (511 aa).

2 residues coordinate Mn(2+): Asp14 and Ser64. The active-site Phosphoserine intermediate is the Ser64. Substrate-binding positions include His125, 155 to 156, Arg187, Arg193, 259 to 262, and Lys333; these read RD and RADR. Positions 400, 404, 441, 442, and 460 each coordinate Mn(2+).

This sequence belongs to the BPG-independent phosphoglycerate mutase family. Monomer. Mn(2+) is required as a cofactor.

The catalysed reaction is (2R)-2-phosphoglycerate = (2R)-3-phosphoglycerate. It functions in the pathway carbohydrate degradation; glycolysis; pyruvate from D-glyceraldehyde 3-phosphate: step 3/5. Functionally, catalyzes the interconversion of 2-phosphoglycerate and 3-phosphoglycerate. In Pseudomonas putida (strain ATCC 47054 / DSM 6125 / CFBP 8728 / NCIMB 11950 / KT2440), this protein is 2,3-bisphosphoglycerate-independent phosphoglycerate mutase.